The chain runs to 156 residues: Large ribosomal subunit protein uL11 (156 aa).

A disordered region spans residues 1 to 20 (MAQSVKTMVEGGKATTGPPI).

Belongs to the universal ribosomal protein uL11 family. In terms of assembly, part of the ribosomal stalk of the 50S ribosomal subunit. Interacts with L10 and the large rRNA to form the base of the stalk. L10 forms an elongated spine to which L12 dimers bind in a sequential fashion forming a multimeric L10(L12)X complex.

Forms part of the ribosomal stalk which helps the ribosome interact with GTP-bound translation factors. This Thermoplasma acidophilum (strain ATCC 25905 / DSM 1728 / JCM 9062 / NBRC 15155 / AMRC-C165) protein is Large ribosomal subunit protein uL11.